Consider the following 497-residue polypeptide: Acetyltransferase FGR3 (497 aa).

Ca(2+)-binding residues include aspartate 221 and isoleucine 224. 2 residues coordinate CoA: lysine 255 and aspartate 303. Residue aspartate 386 participates in Ca(2+) binding. Threonine 396 lines the CoA pocket. Residue aspartate 462 participates in Ca(2+) binding. Residues 477-497 (DASEAKKANGTNGTNGVNGSS) are disordered. Over residues 485 to 497 (NGTNGTNGVNGSS) the composition is skewed to low complexity.

This sequence belongs to the trichothecene 3-O-acetyltransferase family.

It functions in the pathway secondary metabolite biosynthesis. Acetyltransferase; part of the gene cluster that mediates the biosynthesis of the tetraketides fugralins such as linear fugralin A and cyclic fugralin B, volatile compounds that play a role in the asexual reproductive cycle but are not involved in pathogenicity. One of the key features of fugralins is the presence of a double methyl group, which is only rarely encountered in fungal secondary metabolites. As the fugralins cluster does not contain an independent methyltransferase, the PKS FGR1 is probably responsible for adding two methyl groups to the same carbon atom. Fugralin B is similar to fugralin A except for a cyclization between the carboxylic acid C-8 and the alcohol on C-4 resulting in a six membered lactone ring, probably catalyzed by the cyclase FGR4. The exact role of the individual cluster genes remains unknown and further work is needed to unravel the biosynthetic pathway. In Gibberella zeae (strain ATCC MYA-4620 / CBS 123657 / FGSC 9075 / NRRL 31084 / PH-1) (Wheat head blight fungus), this protein is Acetyltransferase FGR3.